Reading from the N-terminus, the 138-residue chain is Mitochondrial import inner membrane translocase subunit tim-16 (138 aa).

The segment covering 32–43 (TQQAAARHAAAT) has biased composition (low complexity). Disordered regions lie at residues 32 to 58 (TQQAAARHAAATGQSPSETKENANANA) and 118 to 138 (LSRLEQKSEENKEQQKENSKE). The segment covering 44–56 (GQSPSETKENANA) has biased composition (polar residues). Residues 66–119 (ESLQILNVKTPLNREDVEKHYEHLFAINDKAKGGTFYLQSKVYRAKERIDEELS) are J-like.

This sequence belongs to the TIM16/PAM16 family. Probable component of the PAM complex at least composed of a mitochondrial HSP70 protein, GrpE, tim-44, tim-16 and tim-14. Associates with the TIM23 complex.

The protein localises to the mitochondrion inner membrane. Its function is as follows. Regulates ATP-dependent protein translocation into the mitochondrial matrix. This Caenorhabditis briggsae protein is Mitochondrial import inner membrane translocase subunit tim-16.